The chain runs to 374 residues: DNA primase small subunit PriS (374 aa).

Catalysis depends on residues D99, D101, and D281.

The protein belongs to the eukaryotic-type primase small subunit family. In terms of assembly, heterodimer of a small subunit (PriS) and a large subunit (PriL). It depends on Mg(2+) as a cofactor. The cofactor is Mn(2+).

In terms of biological role, catalytic subunit of DNA primase, an RNA polymerase that catalyzes the synthesis of short RNA molecules used as primers for DNA polymerase during DNA replication. The small subunit contains the primase catalytic core and has DNA synthesis activity on its own. Binding to the large subunit stabilizes and modulates the activity, increasing the rate of DNA synthesis while decreasing the length of the DNA fragments, and conferring RNA synthesis capability. The DNA polymerase activity may enable DNA primase to also catalyze primer extension after primer synthesis. May also play a role in DNA repair. In Methanoregula boonei (strain DSM 21154 / JCM 14090 / 6A8), this protein is DNA primase small subunit PriS.